Reading from the N-terminus, the 110-residue chain is Iron-sulfur cluster assembly protein CyaY (110 aa).

Belongs to the frataxin family.

In terms of biological role, involved in iron-sulfur (Fe-S) cluster assembly. May act as a regulator of Fe-S biogenesis. This Stutzerimonas stutzeri (strain A1501) (Pseudomonas stutzeri) protein is Iron-sulfur cluster assembly protein CyaY.